We begin with the raw amino-acid sequence, 923 residues long: DNA gyrase subunit A (923 aa).

Residues Leu-34–Leu-534 enclose the Topo IIA-type catalytic domain. The O-(5'-phospho-DNA)-tyrosine intermediate role is filled by Tyr-122. The GyrA-box signature appears at Gln-561–Gly-567. The interval Glu-881–Glu-923 is disordered. 2 stretches are compositionally biased toward acidic residues: residues Gly-888 to Ala-901 and Ala-908 to Glu-923.

This sequence belongs to the type II topoisomerase GyrA/ParC subunit family. Heterotetramer, composed of two GyrA and two GyrB chains. In the heterotetramer, GyrA contains the active site tyrosine that forms a transient covalent intermediate with DNA, while GyrB binds cofactors and catalyzes ATP hydrolysis.

It is found in the cytoplasm. It carries out the reaction ATP-dependent breakage, passage and rejoining of double-stranded DNA.. In terms of biological role, a type II topoisomerase that negatively supercoils closed circular double-stranded (ds) DNA in an ATP-dependent manner to modulate DNA topology and maintain chromosomes in an underwound state. Negative supercoiling favors strand separation, and DNA replication, transcription, recombination and repair, all of which involve strand separation. Also able to catalyze the interconversion of other topological isomers of dsDNA rings, including catenanes and knotted rings. Type II topoisomerases break and join 2 DNA strands simultaneously in an ATP-dependent manner. This chain is DNA gyrase subunit A, found in Pseudomonas aeruginosa (strain ATCC 15692 / DSM 22644 / CIP 104116 / JCM 14847 / LMG 12228 / 1C / PRS 101 / PAO1).